Consider the following 316-residue polypeptide: L-lactate dehydrogenase (316 aa).

NAD(+) is bound by residues V15, D37, K42, Y68, and 82–83 (GL). Substrate-binding positions include Q85, R91, and 123-126 (NPVD). NAD(+)-binding positions include 121 to 123 (ASN) and T146. 151–154 (DTSR) is a binding site for substrate. Beta-D-fructose 1,6-bisphosphate contacts are provided by R156 and H171. The Proton acceptor role is filled by H178. A Phosphotyrosine modification is found at Y222. T231 provides a ligand contact to substrate.

Belongs to the LDH/MDH superfamily. LDH family. As to quaternary structure, homotetramer.

The protein localises to the cytoplasm. It catalyses the reaction (S)-lactate + NAD(+) = pyruvate + NADH + H(+). It functions in the pathway fermentation; pyruvate fermentation to lactate; (S)-lactate from pyruvate: step 1/1. With respect to regulation, allosterically activated by fructose 1,6-bisphosphate (FBP). In terms of biological role, catalyzes the conversion of lactate to pyruvate. The protein is L-lactate dehydrogenase of Borreliella burgdorferi (strain ATCC 35210 / DSM 4680 / CIP 102532 / B31) (Borrelia burgdorferi).